Consider the following 97-residue polypeptide: Co-chaperonin GroES (97 aa).

It belongs to the GroES chaperonin family. As to quaternary structure, heptamer of 7 subunits arranged in a ring. Interacts with the chaperonin GroEL.

It localises to the cytoplasm. Its function is as follows. Together with the chaperonin GroEL, plays an essential role in assisting protein folding. The GroEL-GroES system forms a nano-cage that allows encapsulation of the non-native substrate proteins and provides a physical environment optimized to promote and accelerate protein folding. GroES binds to the apical surface of the GroEL ring, thereby capping the opening of the GroEL channel. The chain is Co-chaperonin GroES from Pseudomonas putida (strain GB-1).